Consider the following 626-residue polypeptide: 4-hydroxy-3-methylbut-2-en-1-yl diphosphate synthase (flavodoxin) (626 aa).

[4Fe-4S] cluster contacts are provided by cysteine 521, cysteine 524, cysteine 555, and glutamate 562.

It belongs to the IspG family. Requires [4Fe-4S] cluster as cofactor.

The catalysed reaction is (2E)-4-hydroxy-3-methylbut-2-enyl diphosphate + oxidized [flavodoxin] + H2O + 2 H(+) = 2-C-methyl-D-erythritol 2,4-cyclic diphosphate + reduced [flavodoxin]. The protein operates within isoprenoid biosynthesis; isopentenyl diphosphate biosynthesis via DXP pathway; isopentenyl diphosphate from 1-deoxy-D-xylulose 5-phosphate: step 5/6. In terms of biological role, converts 2C-methyl-D-erythritol 2,4-cyclodiphosphate (ME-2,4cPP) into 1-hydroxy-2-methyl-2-(E)-butenyl 4-diphosphate. The chain is 4-hydroxy-3-methylbut-2-en-1-yl diphosphate synthase (flavodoxin) from Bacteroides fragilis (strain YCH46).